The sequence spans 433 residues: MTIDKKPVTAPESDSKSAAGRKYWTQLCTPILSSLLKSSGSYSAEEQETHIQNLSDYVIPNLGPRPSEAHTKSFLTQSGSPFQPSVNFSSKKTQVRYCWELLGPQGGSDSDPLAVEAAQDILSQLCKAFGYSTRWSDTWLSAFAPTLEEAKSVREMLPKWIATFTGGAELPALKRVPFVFVAFDLDGAKTSMKAYYNPKGKEIATGKPASDLTWKVLRSLTPALSSTAIDLVEKFLAERPVFSAVELVGIDLVDEAGLSDARVKLYVHTENNSFNTVRDYITLGGRLQDETTLKGLAILKDIWHLMLQEPDGTDDDYNKPVNDSTMLCQRAYFSFEMRPGRELPEVKTYLPTWNYVRTDLETIQNYEEVFRRCGFEWGKESKYKELFERAFGPANHDRPKPVHCDASYLYSEKKGIYQTLYFSPPLKDGEEYE.

The protein belongs to the tryptophan dimethylallyltransferase family.

Its pathway is secondary metabolite biosynthesis. Indole diterpene prenyltransferase; part of the gene cluster that mediates the biosynthesis of terpendoles, indole-diterpene (IDT) mycotoxins including terpendole I, terpendole K, terpendole C, as well as the kinesin Eg5 inhibitor terpendole E. Terpendoles biosynthesis begins with the synthesis of geranylgeranyl diphosphate (GGPP) by a yet unidentified GGPP synthase. Condensation of indole-3-glycerol phosphate with GGPP by the prenyltransferase terC then forms 3-geranylgeranylindole (3-GGI), followed by epoxidation and cyclization of this intermediate (by the FAD-dependent monooxygeanse terM and the terpene cyclase terB) to form paspaline. The cytochrome monooxygenase terQ then hydroxylates paspalline at C-11 to yield terpendole E. The cytochrome monooxygenase terP converts terpendole E to 13-desoxyterpendole I, and terQ converts 13-desoxyterpendole I into terpendole I. TerF and terK are required for conversion of terpendole I to terpendole C which is further converted to terpendole K. In Tolypocladium album (Soil fungus), this protein is Indole diterpene prenyltransferase terF.